We begin with the raw amino-acid sequence, 609 residues long: UvrABC system protein C (609 aa).

A GIY-YIG domain is found at 16–94 (SSPGVYRMYD…IKQYMPKYNV (79 aa)). One can recognise a UVR domain in the interval 203–238 (QQVMSVLVQKMEQASSDMRYEQAALYRDQITALRRV).

It belongs to the UvrC family. As to quaternary structure, interacts with UvrB in an incision complex.

The protein localises to the cytoplasm. Functionally, the UvrABC repair system catalyzes the recognition and processing of DNA lesions. UvrC both incises the 5' and 3' sides of the lesion. The N-terminal half is responsible for the 3' incision and the C-terminal half is responsible for the 5' incision. The protein is UvrABC system protein C of Shewanella pealeana (strain ATCC 700345 / ANG-SQ1).